The primary structure comprises 225 residues: UPF0758 protein Sden_0326 (225 aa).

The MPN domain occupies 102-224 (ILTNPDLTRD…IVSFAERGWL (123 aa)). Zn(2+) contacts are provided by His-173, His-175, and Asp-186. The short motif at 173–186 (HNHPSGIAEPSQAD) is the JAMM motif element.

Belongs to the UPF0758 family.

This is UPF0758 protein Sden_0326 from Shewanella denitrificans (strain OS217 / ATCC BAA-1090 / DSM 15013).